The sequence spans 131 residues: UPF0292 protein PF1724 (131 aa).

A Toprim domain is found at 20-103; it reads KGVIIVEGKR…ETRRELQFIA (84 aa). E26, D69, and D71 together coordinate Mg(2+).

It belongs to the UPF0292 family. It depends on Mg(2+) as a cofactor.

The chain is UPF0292 protein PF1724 from Pyrococcus furiosus (strain ATCC 43587 / DSM 3638 / JCM 8422 / Vc1).